A 383-amino-acid polypeptide reads, in one-letter code: Chaperone protein DnaJ (383 aa).

A J domain is found at 5 to 69 (DYYDILGVSK…QKRAQYDQFG (65 aa)). The CR-type zinc finger occupies 138-222 (GKTTTIKYDR…CHGAGHVHER (85 aa)). Zn(2+) is bound by residues Cys-151, Cys-154, Cys-168, Cys-171, Cys-194, Cys-197, Cys-210, and Cys-213. 4 CXXCXGXG motif repeats span residues 151–158 (CKTCHGTG), 168–175 (CPRCHGAG), 194–201 (CPECNGTG), and 210–217 (CDTCHGAG).

This sequence belongs to the DnaJ family. As to quaternary structure, homodimer. It depends on Zn(2+) as a cofactor.

The protein resides in the cytoplasm. Functionally, participates actively in the response to hyperosmotic and heat shock by preventing the aggregation of stress-denatured proteins and by disaggregating proteins, also in an autonomous, DnaK-independent fashion. Unfolded proteins bind initially to DnaJ; upon interaction with the DnaJ-bound protein, DnaK hydrolyzes its bound ATP, resulting in the formation of a stable complex. GrpE releases ADP from DnaK; ATP binding to DnaK triggers the release of the substrate protein, thus completing the reaction cycle. Several rounds of ATP-dependent interactions between DnaJ, DnaK and GrpE are required for fully efficient folding. Also involved, together with DnaK and GrpE, in the DNA replication of plasmids through activation of initiation proteins. In Limosilactobacillus reuteri (strain DSM 20016) (Lactobacillus reuteri), this protein is Chaperone protein DnaJ.